The primary structure comprises 541 residues: Chaperonin GroEL 2 (541 aa).

ATP is bound by residues 29–32 (TLGP), 86–90 (DGTTT), G413, 476–478 (NAA), and D492.

It belongs to the chaperonin (HSP60) family. Forms a cylinder of 14 subunits composed of two heptameric rings stacked back-to-back. Interacts with the co-chaperonin GroES.

It localises to the cytoplasm. It catalyses the reaction ATP + H2O + a folded polypeptide = ADP + phosphate + an unfolded polypeptide.. Its function is as follows. Together with its co-chaperonin GroES, plays an essential role in assisting protein folding. The GroEL-GroES system forms a nano-cage that allows encapsulation of the non-native substrate proteins and provides a physical environment optimized to promote and accelerate protein folding. In Streptomyces coelicolor (strain ATCC BAA-471 / A3(2) / M145), this protein is Chaperonin GroEL 2.